A 366-amino-acid polypeptide reads, in one-letter code: Glucan organizing enzyme 1 (366 aa).

Residues 1–24 (MLPLWARGGKPIVIPLPQKRHITL) lie on the Extracellular side of the membrane. The helical transmembrane segment at 25–45 (PALPILLLLLGTGFLLHSLFF) threads the bilayer. At 46-366 (PPPPPHPPGK…ETYKKWKRGH (321 aa)) the chain is on the cytoplasmic side.

The protein belongs to the glycosyltransferase 32 family.

It is found in the cell membrane. Its function is as follows. Plays a role in the localization of glycogen rosettes to the plasma membrane. Required for correct cell wall organization and may facilitate the connection between beta-1,3-glucan and beta-1,6-glucan in the cell wall. This chain is Glucan organizing enzyme 1, found in Cryptococcus neoformans var. grubii serotype A (strain H99 / ATCC 208821 / CBS 10515 / FGSC 9487) (Filobasidiella neoformans var. grubii).